The primary structure comprises 292 residues: Glutathione S-transferase L2, chloroplastic (292 aa).

The transit peptide at 1 to 56 (MSVGLKVSAFLHPTLALSSRDVSLSSSSSSLYLDRKILRPGSGRRWCKSRRTEPIL) directs the protein to the chloroplast. The GST N-terminal domain occupies 79–160 (GSTRLYISYT…YIDTNFEGPS (82 aa)). Glutathione-binding positions include 89–90 (CP), 117–118 (NR), 131–132 (KV), and 144–145 (ES). A GST C-terminal domain is found at 130 to 286 (NKVPALEHNN…ELVERYKRRV (157 aa)).

The protein belongs to the GST superfamily. Lambda family.

The protein resides in the plastid. The protein localises to the chloroplast. It catalyses the reaction RX + glutathione = an S-substituted glutathione + a halide anion + H(+). Functionally, catalyzes the glutathione-dependent reduction of S-glutathionylquercetin to quercetin. In vitro, possesses glutathione-dependent thiol transferase activity toward 2-hydroxyethyl disulfide (HED). The sequence is that of Glutathione S-transferase L2, chloroplastic (GSTL2) from Arabidopsis thaliana (Mouse-ear cress).